The following is a 267-amino-acid chain: Undecaprenyl-diphosphatase (267 aa).

8 helical membrane-spanning segments follow: residues 1-21 (MTYFEAFFLALLQGFTEFLPI), 39-59 (QGLAFDVAVHVGTLAAVVMYF), 87-107 (WLIILSTIPAAVCGLMFKDFI), 111-131 (LRSAWVIAITTIVFGLLLWWV), 149-169 (ALFLGIAQAAAMIPGTSRSGI), 189-209 (FLMSIPIITLAGSYLGLKLAL), 218-238 (FLGTGIIVSFISAYICIHFFL), and 246-266 (MTPFVIYRLLLGTSLLAWLAL).

The protein belongs to the UppP family.

The protein localises to the cell inner membrane. The catalysed reaction is di-trans,octa-cis-undecaprenyl diphosphate + H2O = di-trans,octa-cis-undecaprenyl phosphate + phosphate + H(+). Catalyzes the dephosphorylation of undecaprenyl diphosphate (UPP). Confers resistance to bacitracin. In Aliivibrio salmonicida (strain LFI1238) (Vibrio salmonicida (strain LFI1238)), this protein is Undecaprenyl-diphosphatase.